The following is a 143-amino-acid chain: Hemoglobin subunit alpha (143 aa).

The region spanning 2-143 (VLSPADKTNV…VSTVLVSKYR (142 aa)) is the Globin domain. The residue at position 4 (S4) is a Phosphoserine. Position 8 is an N6-succinyllysine (K8). T9 is modified (phosphothreonine). Residue K12 is modified to N6-succinyllysine. Position 17 is an N6-acetyllysine; alternate (K17). N6-succinyllysine; alternate is present on K17. A Phosphotyrosine modification is found at Y25. At S36 the chain carries Phosphoserine. N6-succinyllysine is present on K41. S51 carries the post-translational modification Phosphoserine. H60 provides a ligand contact to O2. H89 contributes to the heme b binding site. Residue S104 is modified to Phosphoserine. Residue T110 is modified to Phosphothreonine. S126 is modified (phosphoserine). T136 carries the post-translational modification Phosphothreonine. A Phosphoserine modification is found at S140.

It belongs to the globin family. Heterotetramer of two alpha chains and two beta chains. As to expression, red blood cells.

Involved in oxygen transport from the lung to the various peripheral tissues. Its function is as follows. Hemopressin acts as an antagonist peptide of the cannabinoid receptor CNR1. Hemopressin-binding efficiently blocks cannabinoid receptor CNR1 and subsequent signaling. This is Hemoglobin subunit alpha (HBA) from Pipistrellus abramus (Japanese pipistrelle).